The primary structure comprises 365 residues: uncharacterized protein (365 aa).

2 stretches are compositionally biased toward basic and acidic residues: residues 1–27 and 315–339; these read MDNVQEHDPDTQEHNNETQNHKQEDHS and AKDDEQYAKRLAKEEEERGKKETPK. Disordered regions lie at residues 1–31 and 308–365; these read MDNVQEHDPDTQEHNNETQNHKQEDHSNSYQ and KEEK…CLIS. Residues 340–353 show a composition bias toward polar residues; it reads KASNTPRRNKSNTQ.

To yeast YGL082w. Interacts with sad1.

The protein localises to the cytoplasm. This is an uncharacterized protein from Schizosaccharomyces pombe (strain 972 / ATCC 24843) (Fission yeast).